Reading from the N-terminus, the 587-residue chain is Proline-rich protein 14 (587 aa).

Met-1 is modified (N-acetylmethionine). Positions Met-1 to Gly-11 are enriched in polar residues. Disordered stretches follow at residues Met-1–Ser-48, Val-65–Thr-152, and Ala-181–Leu-241. The tract at residues Met-1–Pro-135 is sufficient for heterochromatin association in interphase and chromatin association in anaphase. The interval Ser-85–Pro-378 is required for the interaction with GRB2 and sufficient to promote the phosphorylation of AKT and cell proliferation. The tract at residues Gly-136–Gly-365 is required for nuclear lamina association. The segment covering Leu-200 to Leu-214 has biased composition (low complexity). Residues Ala-215–Ser-234 show a composition bias toward pro residues. Residue Ser-277 is modified to Phosphoserine. Disordered regions lie at residues Glu-290 to Val-444 and Phe-524 to Thr-587. The span at Ala-314 to Lys-325 shows a compositional bias: polar residues. The segment covering Leu-337–Arg-356 has biased composition (pro residues). Positions Thr-398 to Ser-410 are enriched in low complexity. The required for nuclear localization stretch occupies residues Arg-519 to Ser-536. Residues Gly-538 to Pro-548 show a composition bias toward low complexity. Over residues Leu-572 to Gln-581 the composition is skewed to acidic residues.

As to quaternary structure, interacts (via proline-rich region) with GRB2 (via SH3 domain 2). Interacts (via N-terminus) with CBX5.

It is found in the chromosome. It localises to the nucleus. Its subcellular location is the nucleus lamina. The protein localises to the nucleoplasm. Functionally, functions in tethering peripheral heterochromatin to the nuclear lamina during interphase, possibly through the interaction with heterochromatin protein CBX5/HP1 alpha. Might play a role in reattaching heterochromatin to the nuclear lamina at mitotic exit. Promotes myoblast differentiation during skeletal myogenesis, possibly by stimulating transcription factor MyoD activity via binding to CBX5/HP1 alpha. Involved in the positive regulation of the PI3K-Akt-mTOR signaling pathway and in promoting cell proliferation, possibly via binding to GRB2. The sequence is that of Proline-rich protein 14 (PRR14) from Bos taurus (Bovine).